Consider the following 157-residue polypeptide: MSRNNEELQGISLLGNQKTQYPTGYAPEILEAFDNKHPDNDYFVKFVCPEFTSLCPMTGQPDFATIYIRYIPHIKMVESKSLKLYLFSFRNHGDFHEDCVNIIMKDLIALMDPKYIEVFGEFTPRGGIAIHPFANYGKAGTEFETLARKRLFEHDAQ.

The active-site Thioimide intermediate is cysteine 55. Aspartate 62 serves as the catalytic Proton donor. Substrate-binding positions include valine 77–serine 79 and histidine 96–glutamate 97.

The protein belongs to the GTP cyclohydrolase I family. QueF type 1 subfamily.

It localises to the cytoplasm. It catalyses the reaction 7-aminomethyl-7-carbaguanine + 2 NADP(+) = 7-cyano-7-deazaguanine + 2 NADPH + 3 H(+). Its pathway is tRNA modification; tRNA-queuosine biosynthesis. Its function is as follows. Catalyzes the NADPH-dependent reduction of 7-cyano-7-deazaguanine (preQ0) to 7-aminomethyl-7-deazaguanine (preQ1). This Neisseria meningitidis serogroup B (strain ATCC BAA-335 / MC58) protein is NADPH-dependent 7-cyano-7-deazaguanine reductase.